The chain runs to 388 residues: Putative F-box/kelch-repeat protein At2g29820 (388 aa).

Positions 6-33 are disordered; sequence EILDGPNGDDPNNNPQEGEDNQNENPQE. Low complexity predominate over residues 9–21; sequence DGPNGDDPNNNPQ. Acidic residues predominate over residues 22-33; sequence EGEDNQNENPQE. Residues 38–84 enclose the F-box domain; that stretch reads LRNLLELPEELIERLIAHIPRCYYPYISLVSRDFRQVITSDKLFRTR. Kelch repeat units follow at residues 140 to 187 and 189 to 233; these read KMYV…EIGG and IYVI…FSTY.

This Arabidopsis thaliana (Mouse-ear cress) protein is Putative F-box/kelch-repeat protein At2g29820.